Here is a 438-residue protein sequence, read N- to C-terminus: Methionine aminopeptidase 2 (438 aa).

Positions 1–89 (MAAQAAPAEE…LFPNKQYPKG (89 aa)) are disordered. The segment covering 10-20 (ELSKLSVEETK) has biased composition (basic and acidic residues). The span at 51–65 (AKKKKKRKPRKKKKA) shows a compositional bias: basic residues. His191 serves as a coordination point for substrate. A divalent metal cation is bound by residues Asp211, Asp222, and His291. His299 contributes to the substrate binding site. A divalent metal cation is bound by residues Glu324 and Glu419.

It belongs to the peptidase M24A family. Methionine aminopeptidase eukaryotic type 2 subfamily. It depends on Co(2+) as a cofactor. Zn(2+) is required as a cofactor. The cofactor is Mn(2+). Requires Fe(2+) as cofactor.

It localises to the cytoplasm. It catalyses the reaction Release of N-terminal amino acids, preferentially methionine, from peptides and arylamides.. Its function is as follows. Cotranslationally removes the N-terminal methionine from nascent proteins. The N-terminal methionine is often cleaved when the second residue in the primary sequence is small and uncharged (Met-Ala-, Cys, Gly, Pro, Ser, Thr, or Val). This Sordaria macrospora (strain ATCC MYA-333 / DSM 997 / K(L3346) / K-hell) protein is Methionine aminopeptidase 2.